Reading from the N-terminus, the 329-residue chain is Ribosome biogenesis regulatory protein homolog (329 aa).

Disordered stretches follow at residues 227–248 (KANI…VSAE) and 262–329 (KKAK…NKRK). Positions 278–295 (LREKKEKQEKKGAKEATR) are enriched in basic and acidic residues. Over residues 320 to 329 (AKKKGANKRK) the composition is skewed to basic residues.

This sequence belongs to the RRS1 family.

Its subcellular location is the nucleus. It is found in the nucleolus. Involved in ribosomal large subunit assembly. The polypeptide is Ribosome biogenesis regulatory protein homolog (Caenorhabditis briggsae).